The chain runs to 1557 residues: Target of rapamycin complex 1 subunit KOG1 (1557 aa).

4 HEAT repeats span residues 548–586 (RHPPEQLPIVLQVLLSQVHRIRALVLLSRFLDLGPWAVY), 588–625 (SLSIGIFPYVLKLLQSPAPELKPILVFIWARIMSIDYK), 777–814 (CMNTGAVEILLKSLKDPVPEVRTASIFALKHFISGFQD), and 888–925 (RQEIGNLISILPLINDGSSLVRKELVVYFSHIVSRYSN). Positions 1084–1098 (SESNSDSDTQSSNTS) are enriched in low complexity. Residues 1084 to 1114 (SESNSDSDTQSSNTSMKSHTSKKGPSGLYLL) form a disordered region. 7 WD repeats span residues 1207 to 1248 (NNKS…SKFS), 1252 to 1293 (PFGT…DTFK), 1296 to 1346 (SAWR…VEVD), 1350 to 1390 (KTSS…RDSM), 1400 to 1440 (KQGV…PVES), 1452 to 1492 (SQQK…NSFK), and 1517 to 1557 (TSDA…IDYF).

It belongs to the WD repeat RAPTOR family. As to quaternary structure, the target of rapamycin complex 1 (TORC1) is composed of at least KOG1, LST8, TCO89 and either TOR1 (TORC1-A) or TOR2 (TORC1-B). Interacts with PIB2; following activation of PIB2 by glutamine or cysteine. TORC1 binds to and is inhibited by FKBP-rapamycin.

The protein localises to the cell membrane. The protein resides in the vacuole membrane. Functionally, component of TORC1, which regulates multiple cellular processes to control cell growth in response to environmental signals. Nutrient limitation and environmental stress signals cause inactivation of TORC1. Active TORC1 positively controls ribosome biogenesis via control of rRNA, ribosomal protein and tRNA gene expression, and rRNA processing. TORC1 positively controls protein biosynthesis by regulation of mRNA stability, translation initiation factor activity, and high-affinity amino acid permeases that serve to provide amino acids for use by the translation machinery. TORC1 also promotes growth by sequestering a number of nutrient and general stress-responsive transcription factors in the cytoplasm. TORC1 negatively controls macroautophagy, a process to recycle surplus cytoplasmic mass under nutrient starvation conditions. KOG1 may have a role in binding and recruiting substrates of TORC1. This chain is Target of rapamycin complex 1 subunit KOG1 (KOG1), found in Saccharomyces cerevisiae (strain ATCC 204508 / S288c) (Baker's yeast).